The chain runs to 975 residues: Ionotropic receptor 21a (975 aa).

The N-terminal stretch at 1-21 (MFKRIVLAVINLVFLIVSTTA) is a signal peptide. N-linked (GlcNAc...) asparagine glycosylation is found at asparagine 67, asparagine 177, and asparagine 355. The helical transmembrane segment at 433–453 (WPVWVAVILIYLLAIFPLAFS) threads the bilayer. The N-linked (GlcNAc...) asparagine glycan is linked to asparagine 464. Residues 505–525 (IYWVFTIIITACYTGSIIAFI) traverse the membrane as a helical segment. N-linked (GlcNAc...) asparagine glycosylation is found at asparagine 561, asparagine 586, and asparagine 611. Residues 708 to 728 (MFLLMLFGYVVALGVLISEWV) form a helical membrane-spanning segment. Disordered regions lie at residues 757 to 839 (ATAG…HSLS) and 911 to 938 (SPHS…RKEM). 2 stretches are compositionally biased toward polar residues: residues 760 to 777 (GSDN…TNRN) and 788 to 800 (VENS…NGSA). Asparagine 763 and asparagine 797 each carry an N-linked (GlcNAc...) asparagine glycan.

This sequence belongs to the glutamate-gated ion channel (TC 1.A.10.1) family. As to expression, in both female and male antenna, expressed specifically in 3 sensory neurons of flagellomere 13 segment (at protein level).

It is found in the cell projection. Its subcellular location is the cilium membrane. Its function is as follows. Integral part of a neural sensory system in the antenna that provides the neural basis for the response to environmental changes in temperature (thermosensation). Specifically, required for thermosensing by the cooling cell. Plays a role in heat seeking and heat-stimulated blood feeding behavior. The protein is Ionotropic receptor 21a of Anopheles gambiae (African malaria mosquito).